The sequence spans 447 residues: MEKRVEKRRIVLVPLPLLGHFTPMMQLGQALILKGFSIIVPQGEFNRVNSSQKFPGFQFITIPDSELEANGPVGSLTQLNKIMEASFKDCIRQLLKQQGNDIACIIYDEFMYFCGAVAEELKLPNFIFSTQTATHKVCCNVLSKLNAKKYLIDMEEHDVQNKVVENMHPLRYKDLPTATFGELEPFLELCRDVVNKRTASAVIINTVTCLESSSLTRLQQELQIPVYPLGPLHITDSSTGFTVLQEDRSCVEWLNKQKPRSVIYISLGSMVLMETKEMLEMAWGMLNSNQPFLWVIRPGSVSGSEGIESLPEEVSKMVLEKGYIVKWAPQIEVLGHPSVGGFWSHCGWNSTLESIVEGVPMICRPYQGEQMLNAIYLESVWRIGIQVGGELERGAVERAVKRLIVDKEGASMRERTLVLKEKLKASIRGGGSSCNALDELVKHLKTE.

UDP-alpha-D-glucose is bound by residues Ser269, 328-330 (APQ), 345-353 (HCGWNSTLE), and 367-370 (QGEQ).

The protein belongs to the UDP-glycosyltransferase family.

This chain is UDP-glycosyltransferase 76E3 (UGT76E3), found in Arabidopsis thaliana (Mouse-ear cress).